Here is a 276-residue protein sequence, read N- to C-terminus: Omega-amidase NIT2 (276 aa).

Residues 4–248 (FRLALIQLQI…EAIVYSDIDL (245 aa)) form the CN hydrolase domain. S26 is subject to Phosphoserine. E43 functions as the Proton acceptor in the catalytic mechanism. K68 bears the N6-acetyllysine; alternate mark. N6-succinyllysine; alternate is present on K68. Catalysis depends on K112, which acts as the Proton donor. K123 and K130 each carry N6-succinyllysine. C153 acts as the Nucleophile in catalysis.

In terms of assembly, homodimer. In terms of tissue distribution, detected in fetal brain (at protein level). Ubiquitous. Detected in heart, brain, placenta, lung, liver, skeletal muscle, kidney, pancreas, prostate, spleen, thymus, prostate, testis, ovary, small intestine and colon.

The protein resides in the cytoplasm. The catalysed reaction is a monoamide of a dicarboxylate + H2O = a dicarboxylate + NH4(+). It catalyses the reaction 2-oxoglutaramate + H2O = 2-oxoglutarate + NH4(+). The enzyme catalyses 2-oxosuccinamate + H2O = oxaloacetate + NH4(+). Has omega-amidase activity. The role of omega-amidase is to remove potentially toxic intermediates by converting 2-oxoglutaramate and 2-oxosuccinamate to biologically useful 2-oxoglutarate and oxaloacetate, respectively. This is Omega-amidase NIT2 (NIT2) from Homo sapiens (Human).